We begin with the raw amino-acid sequence, 665 residues long: UvrABC system protein B (665 aa).

The 388-residue stretch at 25–412 (ASIEGGNRYQ…ENRIVEQVIR (388 aa)) folds into the Helicase ATP-binding domain. 38-45 (GATGTGKT) is an ATP binding site. Positions 91 to 114 (YYDYYQPEAYIPVTDTYIEKTAAI) match the Beta-hairpin motif. Positions 429–583 (QIDDLLGEIK…VAYNKLHGIT (155 aa)) constitute a Helicase C-terminal domain. The region spanning 626-661 (PNLIDKLEAQMKEASKKLEFEEAAKLRDRIKQLRDK) is the UVR domain.

This sequence belongs to the UvrB family. Forms a heterotetramer with UvrA during the search for lesions. Interacts with UvrC in an incision complex.

It localises to the cytoplasm. Its function is as follows. The UvrABC repair system catalyzes the recognition and processing of DNA lesions. A damage recognition complex composed of 2 UvrA and 2 UvrB subunits scans DNA for abnormalities. Upon binding of the UvrA(2)B(2) complex to a putative damaged site, the DNA wraps around one UvrB monomer. DNA wrap is dependent on ATP binding by UvrB and probably causes local melting of the DNA helix, facilitating insertion of UvrB beta-hairpin between the DNA strands. Then UvrB probes one DNA strand for the presence of a lesion. If a lesion is found the UvrA subunits dissociate and the UvrB-DNA preincision complex is formed. This complex is subsequently bound by UvrC and the second UvrB is released. If no lesion is found, the DNA wraps around the other UvrB subunit that will check the other stand for damage. The chain is UvrABC system protein B from Nostoc sp. (strain PCC 7120 / SAG 25.82 / UTEX 2576).